The chain runs to 220 residues: Phosphopantothenoylcysteine decarboxylase (220 aa).

FMN is bound by residues 29–31 and 54–56; these read GSV and TKA. H91 serves as the catalytic Proton donor. FMN contacts are provided by residues 107–110 and A141; that span reads SANT. 3 residues coordinate N-[(R)-4-phosphopantothenoyl]-L-cysteine: N143, R173, and A175. C176 serves as the catalytic Proton donor. M184 contacts N-[(R)-4-phosphopantothenoyl]-L-cysteine.

It belongs to the HFCD (homooligomeric flavin containing Cys decarboxylase) superfamily. In terms of assembly, forms homotrimers. Interacts with HIP1. Interacts with HD1 in the dark. FMN serves as cofactor. Expressed in root meristem, shoot apical meristem (SAM), intercalary meristem, floral meristem, embryo and tip of the coleoptile before true leaf emergence.

The protein localises to the nucleus. It catalyses the reaction N-[(R)-4-phosphopantothenoyl]-L-cysteine + H(+) = (R)-4'-phosphopantetheine + CO2. It functions in the pathway cofactor biosynthesis; coenzyme A biosynthesis; CoA from (R)-pantothenate: step 3/5. Functionally, catalyzes the decarboxylation of 4'-phosphopantothenoylcysteine to 4'-phosphopantetheine, a key step in coenzyme A biosynthesis. Involved in salt and osmotic tolerance, and light-regulated plant growth. Trimerization of HAL3 recruits and activates the E3 ubiquitin-protein ligase HIP1, which leads to the degradation of cell cycle suppressors, resulting in enhancement of cell division and plant growth. HAL3 function in cell division seems to be independent from its PPC decarboxylase activity. Acts as a positive regulator of flowering by binding to HD1 in the dark. The polypeptide is Phosphopantothenoylcysteine decarboxylase (Oryza sativa subsp. japonica (Rice)).